Here is a 434-residue protein sequence, read N- to C-terminus: Threonylcarbamoyladenosine tRNA methylthiotransferase MtaB (434 aa).

The MTTase N-terminal domain maps to 2 to 112; the sequence is KTVRIETFGC…IVDHINSLNG (111 aa). [4Fe-4S] cluster contacts are provided by Cys-11, Cys-46, Cys-77, Cys-147, Cys-151, and Cys-154. Residues 133–362 enclose the Radical SAM core domain; sequence FEDRTRSYIK…KEKAKDVSIR (230 aa).

Belongs to the methylthiotransferase family. MtaB subfamily. [4Fe-4S] cluster is required as a cofactor.

It localises to the cytoplasm. It catalyses the reaction N(6)-L-threonylcarbamoyladenosine(37) in tRNA + (sulfur carrier)-SH + AH2 + 2 S-adenosyl-L-methionine = 2-methylsulfanyl-N(6)-L-threonylcarbamoyladenosine(37) in tRNA + (sulfur carrier)-H + 5'-deoxyadenosine + L-methionine + A + S-adenosyl-L-homocysteine + 2 H(+). Catalyzes the methylthiolation of N6-threonylcarbamoyladenosine (t(6)A), leading to the formation of 2-methylthio-N6-threonylcarbamoyladenosine (ms(2)t(6)A) at position 37 in tRNAs that read codons beginning with adenine. The sequence is that of Threonylcarbamoyladenosine tRNA methylthiotransferase MtaB (mtaB) from Thermotoga maritima (strain ATCC 43589 / DSM 3109 / JCM 10099 / NBRC 100826 / MSB8).